The primary structure comprises 82 residues: Probable acyl carrier protein IacP (82 aa).

Residues Met-3–Leu-78 form the Carrier domain. The residue at position 38 (Ser-38) is an O-(pantetheine 4'-phosphoryl)serine.

4'-phosphopantetheine is transferred from CoA to a specific serine of apo-IacP.

It localises to the cytoplasm. Acyl carrier protein. This is Probable acyl carrier protein IacP (iacP) from Salmonella typhimurium (strain SL1344).